The sequence spans 311 residues: Ribosomal RNA small subunit methyltransferase H (311 aa).

S-adenosyl-L-methionine is bound by residues 32 to 34 (AGH), Asp52, Phe79, Asp100, and Gln107. The segment at 287 to 311 (TASQEELEENNRARSAKLRIAEKRK) is disordered. The span at 300-311 (RSAKLRIAEKRK) shows a compositional bias: basic residues.

It belongs to the methyltransferase superfamily. RsmH family.

The protein resides in the cytoplasm. It carries out the reaction cytidine(1402) in 16S rRNA + S-adenosyl-L-methionine = N(4)-methylcytidine(1402) in 16S rRNA + S-adenosyl-L-homocysteine + H(+). Functionally, specifically methylates the N4 position of cytidine in position 1402 (C1402) of 16S rRNA. The polypeptide is Ribosomal RNA small subunit methyltransferase H (Bacillus subtilis (strain 168)).